Here is a 76-residue protein sequence, read N- to C-terminus: Acyl carrier protein (76 aa).

The Carrier domain occupies 1-76 (MSIEERVKKI…SAIDYVQNNQ (76 aa)). Position 36 is an O-(pantetheine 4'-phosphoryl)serine (S36).

Belongs to the acyl carrier protein (ACP) family. Post-translationally, 4'-phosphopantetheine is transferred from CoA to a specific serine of apo-ACP by AcpS. This modification is essential for activity because fatty acids are bound in thioester linkage to the sulfhydryl of the prosthetic group.

The protein resides in the cytoplasm. The protein operates within lipid metabolism; fatty acid biosynthesis. Carrier of the growing fatty acid chain in fatty acid biosynthesis. This chain is Acyl carrier protein, found in Actinobacillus succinogenes (strain ATCC 55618 / DSM 22257 / CCUG 43843 / 130Z).